Here is a 461-residue protein sequence, read N- to C-terminus: Pyruvate kinase (461 aa).

Arg46 is a binding site for substrate. 2 residues coordinate K(+): Asn48 and Asp80. ATP is bound at residue 48 to 51 (NLAH). The ATP site is built by Arg87 and Lys165. Glu232 is a Mg(2+) binding site. Substrate contacts are provided by Gly255, Asp256, and Thr288. Residue Asp256 participates in Mg(2+) binding.

The protein belongs to the pyruvate kinase family. Homotetramer. A divalent metal cation is required as a cofactor.

The enzyme catalyses pyruvate + ATP = phosphoenolpyruvate + ADP + H(+). It participates in carbohydrate degradation; glycolysis; pyruvate from D-glyceraldehyde 3-phosphate: step 5/5. Its activity is regulated as follows. Not activated by classical allosteric effectors. The polypeptide is Pyruvate kinase (pyk) (Pyrobaculum aerophilum (strain ATCC 51768 / DSM 7523 / JCM 9630 / CIP 104966 / NBRC 100827 / IM2)).